The following is a 609-amino-acid chain: Autophagy-related protein 22-1 (609 aa).

4 consecutive transmembrane segments (helical) span residues 35-55, 117-137, 151-171, and 176-196; these read YGWA…PITL, TASF…ILII, LLLM…LGVV, and MVGA…FVLL. A compositionally biased stretch (basic and acidic residues) spans 214-231; that stretch reads AREPRPALDDSRAQEGHS. The segment at 214-240 is disordered; that stretch reads AREPRPALDDSRAQEGHSDTTNGIEHG. The N-linked (GlcNAc...) asparagine glycan is linked to N244. A helical transmembrane segment spans residues 287–307; sequence IGIGYIGAIILQIVCILVVIA. N309 is a glycosylation site (N-linked (GlcNAc...) asparagine). 3 consecutive transmembrane segments (helical) span residues 317-337, 381-401, and 415-435; these read LVLF…ALWL, ILLF…VSGT, and AALG…AFSW. N443 carries an N-linked (GlcNAc...) asparagine glycan. Transmembrane regions (helical) follow at residues 450–470, 477–497, 522–542, and 552–572; these read IIAC…GFIP, FLGL…GLVM, ALYA…VGII, and AFVF…LVDV.

The protein belongs to the ATG22 family.

It localises to the vacuole membrane. In terms of biological role, vacuolar effluxer which mediate the efflux of amino acids resulting from autophagic degradation. The release of autophagic amino acids allows the maintenance of protein synthesis and viability during nitrogen starvation. This Aspergillus fumigatus (strain ATCC MYA-4609 / CBS 101355 / FGSC A1100 / Af293) (Neosartorya fumigata) protein is Autophagy-related protein 22-1 (atg22-1).